The primary structure comprises 944 residues: 2-oxoglutarate dehydrogenase E1 component (944 aa).

A disordered region spans residues 914–944 (RRRRSSPAEGDPTVHKKEQERIVSDSLTRKN). The span at 925-936 (PTVHKKEQERIV) shows a compositional bias: basic and acidic residues.

It belongs to the alpha-ketoglutarate dehydrogenase family. As to quaternary structure, homodimer. Part of the 2-oxoglutarate dehydrogenase (OGDH) complex composed of E1 (2-oxoglutarate dehydrogenase), E2 (dihydrolipoamide succinyltransferase) and E3 (dihydrolipoamide dehydrogenase); the complex contains multiple copies of the three enzymatic components (E1, E2 and E3). It depends on thiamine diphosphate as a cofactor.

The enzyme catalyses N(6)-[(R)-lipoyl]-L-lysyl-[protein] + 2-oxoglutarate + H(+) = N(6)-[(R)-S(8)-succinyldihydrolipoyl]-L-lysyl-[protein] + CO2. E1 component of the 2-oxoglutarate dehydrogenase (OGDH) complex which catalyzes the decarboxylation of 2-oxoglutarate, the first step in the conversion of 2-oxoglutarate to succinyl-CoA and CO(2). The polypeptide is 2-oxoglutarate dehydrogenase E1 component (Bacillus subtilis (strain 168)).